The sequence spans 238 residues: Uridylate kinase (238 aa).

An ATP-binding site is contributed by Lys-12–Gly-15. Gly-54 provides a ligand contact to UMP. Residues Gly-55 and Arg-59 each contribute to the ATP site. UMP-binding positions include Asp-74 and Thr-135–Thr-142. Residues Thr-162, Asn-163, Tyr-168, and Asp-171 each coordinate ATP.

The protein belongs to the UMP kinase family. As to quaternary structure, homohexamer.

Its subcellular location is the cytoplasm. It carries out the reaction UMP + ATP = UDP + ADP. It participates in pyrimidine metabolism; CTP biosynthesis via de novo pathway; UDP from UMP (UMPK route): step 1/1. Its activity is regulated as follows. Inhibited by UTP. Functionally, catalyzes the reversible phosphorylation of UMP to UDP. The sequence is that of Uridylate kinase from Nitrobacter winogradskyi (strain ATCC 25391 / DSM 10237 / CIP 104748 / NCIMB 11846 / Nb-255).